The primary structure comprises 574 residues: Egalitarian protein homolog (574 aa).

The disordered stretch occupies residues 259–278 (LNEDGSENGSDEGEETNNNG). Acidic residues predominate over residues 262–273 (DGSENGSDEGEE). Residues 312 to 414 (NMEKKVVGLD…SLLQHEKFNK (103 aa)) enclose the 3'-5' exonuclease domain.

Component of a dynein-regulating complex composed of at least bicd-1, dlc-1 and egal-1.

It is found in the nucleus envelope. Functionally, part of a complex with bicd-1 and dlc-1, which is recruited to the nuclear envelope by unc-83, where in turn, it recruits dynein to the nuclear surface and regulates nuclear migration in hypodermal precursor cells. This chain is Egalitarian protein homolog, found in Caenorhabditis elegans.